The sequence spans 103 residues: MERIRLKLKAYDHRVLDRTVAAIVEAVKRTGADVRGPVPMPTKIKRYTVLKSPHVNKDSREQFEMRIHARMLDIVAATPDTVDSLTKLDLAPEVNVEVRAMGK.

This sequence belongs to the universal ribosomal protein uS10 family. In terms of assembly, part of the 30S ribosomal subunit.

In terms of biological role, involved in the binding of tRNA to the ribosomes. This Campylobacter fetus subsp. fetus (strain 82-40) protein is Small ribosomal subunit protein uS10.